A 75-amino-acid chain; its full sequence is UPF0235 protein Mflv_3569 (75 aa).

Belongs to the UPF0235 family.

The sequence is that of UPF0235 protein Mflv_3569 from Mycolicibacterium gilvum (strain PYR-GCK) (Mycobacterium gilvum (strain PYR-GCK)).